We begin with the raw amino-acid sequence, 803 residues long: Putative metal ion transporter C27B12.12c (803 aa).

Residues 1 to 20 (MSFQQPSNGAQGGNNNALEK) are compositionally biased toward polar residues. The interval 1–255 (MSFQQPSNGA…SSDVSGSDEN (255 aa)) is disordered. The segment covering 21–45 (TSSNEATSSSSTQVSSLSASGISVS) has biased composition (low complexity). The span at 58 to 82 (MQVQSSQHLEANVQSPVSSQTTYAT) shows a compositional bias: polar residues. Composition is skewed to basic residues over residues 105-123 (KPKK…RKKI) and 152-166 (QSNK…KHSP). 2 stretches are compositionally biased toward low complexity: residues 181 to 194 (ALSA…QHAS) and 218 to 253 (SSSS…SGSD). At Ser-318 the chain carries Phosphoserine. Disordered stretches follow at residues 326 to 349 (PRLK…QVDE) and 406 to 431 (FEPH…NNAE). Positions 337–347 (DNEDREVDSQV) are enriched in acidic residues. Positions 406-419 (FEPHWNDLSPHDPN) are enriched in basic and acidic residues. Over residues 420–430 (DPSSSLHSNNA) the composition is skewed to polar residues. Ser-449 and Ser-452 each carry phosphoserine. The next 2 membrane-spanning stretches (helical) occupy residues 745 to 765 (ITLI…FGMN) and 776 to 796 (LAWF…GWII).

Belongs to the CorA metal ion transporter (MIT) (TC 1.A.35) family.

It localises to the cytoplasm. Its subcellular location is the membrane. This Schizosaccharomyces pombe (strain 972 / ATCC 24843) (Fission yeast) protein is Putative metal ion transporter C27B12.12c.